Here is a 358-residue protein sequence, read N- to C-terminus: uncharacterized protein (358 aa).

207 to 214 (AAVKDGKT) contributes to the ATP binding site.

This is an uncharacterized protein from Bacillus subtilis (strain 168).